A 216-amino-acid polypeptide reads, in one-letter code: 3-isopropylmalate dehydratase small subunit 1 (216 aa).

The protein belongs to the LeuD family. LeuD type 1 subfamily. As to quaternary structure, heterodimer of LeuC and LeuD.

The catalysed reaction is (2R,3S)-3-isopropylmalate = (2S)-2-isopropylmalate. It participates in amino-acid biosynthesis; L-leucine biosynthesis; L-leucine from 3-methyl-2-oxobutanoate: step 2/4. Its function is as follows. Catalyzes the isomerization between 2-isopropylmalate and 3-isopropylmalate, via the formation of 2-isopropylmaleate. This Bordetella bronchiseptica (strain ATCC BAA-588 / NCTC 13252 / RB50) (Alcaligenes bronchisepticus) protein is 3-isopropylmalate dehydratase small subunit 1.